Consider the following 95-residue polypeptide: Opiscorpine-3 (95 aa).

The first 19 residues, 1 to 19 (MNNKLTALIFLGLLAIASC), serve as a signal peptide directing secretion. The region spanning 55 to 95 (EFMCVANVDMTKSCDTHCQKASGEKGYCHGTKCKCGVPLSY) is the BetaSPN-type CS-alpha/beta domain. 3 cysteine pairs are disulfide-bonded: Cys-58/Cys-82, Cys-68/Cys-87, and Cys-72/Cys-89.

Belongs to the long chain scorpion toxin family. Class 3 subfamily. Expressed by the venom gland.

It localises to the secreted. Its function is as follows. Has antimicrobial activity against yeasts and bacteria. This Opistophthalmus carinatus (African yellow leg scorpion) protein is Opiscorpine-3.